The chain runs to 509 residues: Aldehyde dehydrogenase 1A1 (509 aa).

NAD(+) is bound by residues 175–178 (IPWN), 201–204 (KPAE), 234–235 (GP), 254–255 (GS), and 277–279 (ELG). Glu277 serves as the catalytic Proton acceptor. Cys311 acts as the Nucleophile in catalysis. NAD(+)-binding positions include 357–361 (EQFQK) and 408–410 (EIF).

This sequence belongs to the aldehyde dehydrogenase family. In terms of assembly, homotetramer.

It is found in the cytoplasm. The protein localises to the cytosol. Its subcellular location is the cell projection. The protein resides in the axon. It catalyses the reaction an aldehyde + NAD(+) + H2O = a carboxylate + NADH + 2 H(+). The enzyme catalyses all-trans-retinal + NAD(+) + H2O = all-trans-retinoate + NADH + 2 H(+). The catalysed reaction is 9-cis-retinal + NAD(+) + H2O = 9-cis-retinoate + NADH + 2 H(+). It carries out the reaction 11-cis-retinal + NAD(+) + H2O = 11-cis-retinoate + NADH + 2 H(+). It catalyses the reaction 13-cis-retinal + NAD(+) + H2O = 13-cis-retinoate + NADH + 2 H(+). The enzyme catalyses 3-deoxyglucosone + NAD(+) + H2O = 2-dehydro-3-deoxy-D-gluconate + NADH + 2 H(+). The catalysed reaction is (E)-4-hydroxynon-2-enal + NAD(+) + H2O = (E)-4-hydroxynon-2-enoate + NADH + 2 H(+). It carries out the reaction malonaldehyde + NAD(+) + H2O = 3-oxopropanoate + NADH + 2 H(+). It catalyses the reaction hexanal + NAD(+) + H2O = hexanoate + NADH + 2 H(+). The enzyme catalyses propanal + NAD(+) + H2O = propanoate + NADH + 2 H(+). The catalysed reaction is acetaldehyde + NAD(+) + H2O = acetate + NADH + 2 H(+). It carries out the reaction benzaldehyde + NAD(+) + H2O = benzoate + NADH + 2 H(+). It catalyses the reaction 4-aminobutanal + NAD(+) + H2O = 4-aminobutanoate + NADH + 2 H(+). It participates in cofactor metabolism; retinol metabolism. In terms of biological role, cytosolic dehydrogenase that catalyzes the irreversible oxidation of a wide range of aldehydes to their corresponding carboxylic acid. Functions downstream of retinol dehydrogenases and catalyzes the oxidation of retinaldehyde into retinoic acid, the second step in the oxidation of retinol/vitamin A into retinoic acid. This pathway is crucial to control the levels of retinol and retinoic acid, two important molecules which excess can be teratogenic and cytotoxic. Also oxidizes aldehydes resulting from lipid peroxidation like (E)-4-hydroxynon-2-enal/HNE, malonaldehyde and hexanal that form protein adducts and are highly cytotoxic. By participating for instance to the clearance of (E)-4-hydroxynon-2-enal/HNE in the lens epithelium prevents the formation of HNE-protein adducts and lens opacification. Also functions downstream of fructosamine-3-kinase in the fructosamine degradation pathway by catalyzing the oxidation of 3-deoxyglucosone, the carbohydrate product of fructosamine 3-phosphate decomposition, which is itself a potent glycating agent that may react with lysine and arginine side-chains of proteins. Also has an aminobutyraldehyde dehydrogenase activity and is probably part of an alternative pathway for the biosynthesis of GABA/4-aminobutanoate in midbrain, thereby playing a role in GABAergic synaptic transmission. This chain is Aldehyde dehydrogenase 1A1, found in Gallus gallus (Chicken).